Reading from the N-terminus, the 501-residue chain is MFSNQYIQQRIHKANSLREEGKNPYQNGLKRSLTNAAFLEKYAYVKDLEEPKDKEKCESIVGRVKLLRLMGKACFIKVEDESAILQAYVSQNELNDEFKSLKKHLEVGDIVLVKGFPFATKTGELSVHALEFHILSKTIVPLPEKFHGLSDIELRYRQRYLDLIVNPSVKDVFKKRSLIVSSVRKFFEMEGFLEVETPMMHPIPGGANARPFITYHNALEVERYLRIAPELYLKRLIVGGFEAVFEINRNFRNEGMDHSHNPEFTMIEFYWAYHTYEDLIELSKRLFDYLLKTLNLDSKIIYNDMEVDFNQTSVISYLDALETIGGISRDILEKEDRLLAYLLEQGVKVEPNLTYGKLLAEAFDHFVEHQLINPTFVTQYPIEISPLARRNDSNPNIADRFELFIAGKEIANGFSELNDPLDQLERFKNQVAEKEKGDEEAQYMDEDYVWALAHGMPPTAGQGIGIDRLVMLLTGAKSIKDVILFPAMRPVKNDFNIESGE.

Residues E402 and E409 each contribute to the Mg(2+) site.

It belongs to the class-II aminoacyl-tRNA synthetase family. Homodimer. Requires Mg(2+) as cofactor.

Its subcellular location is the cytoplasm. The enzyme catalyses tRNA(Lys) + L-lysine + ATP = L-lysyl-tRNA(Lys) + AMP + diphosphate. The sequence is that of Lysine--tRNA ligase from Helicobacter pylori (strain P12).